The primary structure comprises 1024 residues: MARPKSSGSRMDRQLEHDVCELVRQVTGLQDEADPNFQLALDFVWSNFRFHRFLDVNSHKVEKTIEGIYEKFTIHSDLNKAASWKRLTKEFLNASLPSTEKIKTDAHYSILSLLLCLSDSPSNSNYVETPREKEVEKKDDFDWGKYLMEGEEIGLGPNIDTPNWSEDSDDEDAQQPLSREDSGIQVDRTPLEEQDHNRKGGPQVCWEDEPDSRSWLEQHVVHQYWTTRRFRIPHSAHLHSNLAAVWDQHLYSSDPLYVPDDRVVVTETQVIRETLWLLSGVKKMFIFQLIDGKVTVRNNIIVTHLTHSCLRSVLEQIAAYGQVVFRLQEFIDEVMGHSSESLPPGNGPIPKKQPDAPFRTYQAFMWALYKYFINFKEELTDIEKCVISSDTTITLAIVVNKLAPRLAQLKVLDKVFSTGVAEVPPDTRNVVRASHLLNTLYKAILEYDNVGEASEQTVSLLFSLWVETVRPYLQTVDEWIVHGHLWDGAREFIIQRNKNVPVNHRDFWYATYTLYSVSEKTENEDKVSDSASASSGSDQGPSSRQHTMVSFLKPVLKQIIMAGKSMQLLKNLNCAEGPACQAAARDAERKSLYTLFLESIQLRLQHGEDSAPHIVNEDQTTKENLIKMQSIAERHLELDDIHDPLLAINFARLYLEQSDFHEKFAGGDICVDRSSESVTCQTFELTLRSCLYPHIDKQYLHCCGNLMQTLKRDFRLVEYLQAMRNFFLMEGGDTMYDFYTSIFDKIREKETWQNVSFLNVQLQEAVGQRYPEDSLRLSISFENVDTTKKKLPVHILDGLTLSYKVPWPVDIVISVECQKIYNQVFLLLLQIKWAKYSLDVLLFGELGNAAERSQAKEDIPRDQDTPSQFGPPKESLRQQIHRMFLLRVKLMHFVNSLHNYIMTRILHSTGLEFQHQVEEAKDLDQLIKIHYRYLSTIHDRCLLREKVSFVKEAIMKVLNLALMFAEGWQAGLGAWQMESIEKMESDFKNCHMFLVTILNKAVCRGSFPHLESLALSLMAGMEQS.

3 disordered regions span residues 153 to 203 (IGLG…GGPQ), 523 to 545 (NEDKVSDSASASSGSDQGPSSRQ), and 853 to 873 (SQAKEDIPRDQDTPSQFGPPK). Residues 189 to 198 (TPLEEQDHNR) show a composition bias toward basic and acidic residues. Positions 529-543 (DSASASSGSDQGPSS) are enriched in low complexity. Residues 853-864 (SQAKEDIPRDQD) are compositionally biased toward basic and acidic residues.

This sequence belongs to the TUBGCP family. In terms of assembly, component of the gamma-tubulin ring complex (gTuRC) consisting of TUBGCP2, TUBGCP3, TUBGCP4, TUBGCP5 and TUBGCP6 and gamma-tubulin TUBG1 or TUBG2. TUBGCP2, TUBGCP3, TUBGCP4, TUBGCP5 and TUBGCP6 assemble in a 5:5:2:1:1 stoichiometry; each is associated with a gamma-tubulin, thereby arranging 14 gamma-tubulins in a helical manner. Gamma-tubulin at the first position is blocked by TUBGCP3 at the last position, allowing 13 protafilaments to grow into a microtubule. The gTuRC (via TUBGCP3 and TUBGCP6) interacts with ACTB and MZT1; the interactions form a luminal bridge that stabilizes the initial structure during complex assembly. The gTuRC (via TUBGCP2) interacts with MZT2A/MZT2B and CDK5RAP2 (via CM1 motif); the interactions play a role in gTuRC activation.

It is found in the cytoplasm. The protein resides in the cytoskeleton. The protein localises to the microtubule organizing center. Its subcellular location is the centrosome. Functionally, component of the gamma-tubulin ring complex (gTuRC) which mediates microtubule nucleation. The gTuRC regulates the minus-end nucleation of alpha-beta tubulin heterodimers that grow into microtubule protafilaments, a critical step in centrosome duplication and spindle formation. The sequence is that of Gamma-tubulin complex component 5 (Tubgcp5) from Mus musculus (Mouse).